The primary structure comprises 415 residues: Protein CDC73 homolog (415 aa).

It belongs to the CDC73 family. In terms of assembly, component of the nuclear PAF1 complex (PAF1C), which consists of VIP2/ELF7/PAF1, VIP3/SKI8/WDR61, VIP4/LEO1, VIP5/RTF1, VIP6/ELF8/CTR9 and CDC73. In terms of tissue distribution, expressed in root tips, shoot apex, young leaves and flowers, especially in stamen filaments and carpels.

Its subcellular location is the nucleus. Its function is as follows. Component of the PAF1 complex (PAF1C) which is involved in histone modifications such as methylation on histone H3 'Lys-4' (H3K4me3). Involved in regulation of flowering time. Required for the expression of the flowering repressors FLC and MADS-box genes of the MAF family. Required for histone H3 trimethylation on 'Lys-4' (H3K4me3) at the FLC locus. Prevents trimethylation on 'Lys-27' (H3K27me3) at the same locus. The chain is Protein CDC73 homolog from Arabidopsis thaliana (Mouse-ear cress).